A 59-amino-acid polypeptide reads, in one-letter code: Large ribosomal subunit protein bL32 (59 aa).

Residues 1–59 form a disordered region; it reads MAVQQNRKTPSKRGMRRSHDSLSKPTLSTEQNTGETHRRHHISADGYYRGRKVTRGQDD. Residues 23-34 show a composition bias toward polar residues; it reads SKPTLSTEQNTG. Over residues 49 to 59 the composition is skewed to basic residues; that stretch reads RGRKVTRGQDD.

The protein belongs to the bacterial ribosomal protein bL32 family.

The polypeptide is Large ribosomal subunit protein bL32 (Halorhodospira halophila (strain DSM 244 / SL1) (Ectothiorhodospira halophila (strain DSM 244 / SL1))).